The chain runs to 392 residues: 8-amino-7-oxononanoate synthase (392 aa).

Arg-18 serves as a coordination point for substrate. 105–106 lines the pyridoxal 5'-phosphate pocket; it reads GY. His-130 lines the substrate pocket. Ser-177, His-205, and Thr-234 together coordinate pyridoxal 5'-phosphate. Lys-237 is modified (N6-(pyridoxal phosphate)lysine). Thr-351 serves as a coordination point for substrate.

It belongs to the class-II pyridoxal-phosphate-dependent aminotransferase family. BioF subfamily. Homodimer. It depends on pyridoxal 5'-phosphate as a cofactor.

It catalyses the reaction 6-carboxyhexanoyl-[ACP] + L-alanine + H(+) = (8S)-8-amino-7-oxononanoate + holo-[ACP] + CO2. It functions in the pathway cofactor biosynthesis; biotin biosynthesis. In terms of biological role, catalyzes the decarboxylative condensation of pimeloyl-[acyl-carrier protein] and L-alanine to produce 8-amino-7-oxononanoate (AON), [acyl-carrier protein], and carbon dioxide. The polypeptide is 8-amino-7-oxononanoate synthase (Thioalkalivibrio sulfidiphilus (strain HL-EbGR7)).